The following is a 383-amino-acid chain: Putative F-box/kelch-repeat protein At1g62270 (383 aa).

The F-box domain maps to 6–51 (TSSFSSLPWDLVEDILARVPATSLKRLRSTCKQWNFLFNDQIFTKM). 3 Kelch repeats span residues 110-158 (KVFH…YGNY), 160-211 (SCYN…LRGN), and 349-383 (TVYIIGENEYWRKEDIVQRSYRPRMFSYVPSLVQI).

The polypeptide is Putative F-box/kelch-repeat protein At1g62270 (Arabidopsis thaliana (Mouse-ear cress)).